We begin with the raw amino-acid sequence, 284 residues long: Ribose-5-phosphate isomerase (284 aa).

This sequence belongs to the ribose 5-phosphate isomerase family.

It localises to the cytoplasm. The enzyme catalyses aldehydo-D-ribose 5-phosphate = D-ribulose 5-phosphate. It participates in carbohydrate degradation; pentose phosphate pathway; D-ribose 5-phosphate from D-ribulose 5-phosphate (non-oxidative stage): step 1/1. The polypeptide is Ribose-5-phosphate isomerase (RKI1) (Lodderomyces elongisporus (strain ATCC 11503 / CBS 2605 / JCM 1781 / NBRC 1676 / NRRL YB-4239) (Yeast)).